A 62-amino-acid chain; its full sequence is Small ribosomal subunit protein eS17 (62 aa).

Belongs to the eukaryotic ribosomal protein eS17 family.

In Methanoculleus marisnigri (strain ATCC 35101 / DSM 1498 / JR1), this protein is Small ribosomal subunit protein eS17.